The primary structure comprises 1203 residues: Probable phospholipid-transporting ATPase 11 (1203 aa).

Topologically, residues 1-71 (MTKCRRRRLH…STKYTLASFI (71 aa)) are cytoplasmic. A helical membrane pass occupies residues 72-93 (PKSLFEQFRRVANFYFLVTGVL). Residues 94 to 97 (SLTA) lie on the Extracellular side of the membrane. Residues 98 to 120 (LSPYSPISALLPLTFVIAASMVK) form a helical membrane-spanning segment. Residues 121 to 303 (EAIEDWGRKK…SRIERKMDKI (183 aa)) are Cytoplasmic-facing. A helical membrane pass occupies residues 304-325 (IYLMFGVVFLMSFIGSIVFGIE). The Extracellular segment spans residues 326-363 (TREDRVRNGGRTERWYLRPDNADIFFDPDRAPMAAVYH). The helical transmembrane segment at 364–381 (FFTAVMLYSYFIPISLYV) threads the bilayer. Topologically, residues 382 to 921 (SIEIVKVLQS…HGHWCYSRIS (540 aa)) are cytoplasmic. Residue Asp-429 is the 4-aspartylphosphate intermediate of the active site. Residues Asp-866 and Asp-870 each contribute to the Mg(2+) site. The chain crosses the membrane as a helical span at residues 922-941 (SMICYFFYKNITFGVTVFLY). Over 942 to 955 (EAYTSFSAQPAYND) the chain is Extracellular. The chain crosses the membrane as a helical span at residues 956–975 (WFLSLFNVFFSSLPVIALGV). The Cytoplasmic segment spans residues 976–1005 (FDQDVSARYCYKFPLLYQEGVQNLLFSWKR). The chain crosses the membrane as a helical span at residues 1006–1028 (IIGWMFNGVFTALAIFFLCKESL). At 1029–1041 (KHQLYNPNGKTAG) the chain is on the extracellular side. A helical membrane pass occupies residues 1042–1064 (REILGGTMYTCVVWVVNLQMALA). At 1065–1070 (ISYFTW) the chain is on the cytoplasmic side. The chain crosses the membrane as a helical span at residues 1071–1091 (LQHIVIWGSVAFWYIFLMIYG). The Extracellular segment spans residues 1092-1108 (AITPSFSTDAYKVFIEA). A helical membrane pass occupies residues 1109–1133 (LAPAPSYWLTTLFVMFFALIPFFVF). The Cytoplasmic segment spans residues 1134 to 1203 (KSVQMRFFPG…DQLNKNFIAF (70 aa)).

Belongs to the cation transport ATPase (P-type) (TC 3.A.3) family. Type IV subfamily.

The protein resides in the membrane. The enzyme catalyses ATP + H2O + phospholipidSide 1 = ADP + phosphate + phospholipidSide 2.. Functionally, involved in transport of phospholipids. This is Probable phospholipid-transporting ATPase 11 from Arabidopsis thaliana (Mouse-ear cress).